We begin with the raw amino-acid sequence, 267 residues long: Alpha-tubulin N-acetyltransferase (267 aa).

Positions 1-197 (MDFRAGLENV…NNFVVYSEFF (197 aa)) constitute an N-acetyltransferase domain. Acetyl-CoA-binding positions include 131–144 (FYIH…GYGK) and 167–176 (SMKMIQFLHK).

Belongs to the acetyltransferase ATAT1 family.

The enzyme catalyses L-lysyl-[alpha-tubulin] + acetyl-CoA = N(6)-acetyl-L-lysyl-[alpha-tubulin] + CoA + H(+). Functionally, specifically acetylates 'Lys-40' in alpha-tubulin on the lumenal side of microtubules. Promotes microtubule destabilization and accelerates microtubule dynamics; this activity may be independent of acetylation activity. Acetylates alpha-tubulin with a slow enzymatic rate, due to a catalytic site that is not optimized for acetyl transfer. Enters the microtubule through each end and diffuses quickly throughout the lumen of microtubules. Acetylates only long/old microtubules because of its slow acetylation rate since it does not have time to act on dynamically unstable microtubules before the enzyme is released. This Schistosoma japonicum (Blood fluke) protein is Alpha-tubulin N-acetyltransferase.